A 369-amino-acid polypeptide reads, in one-letter code: Anhydro-N-acetylmuramic acid kinase (369 aa).

12–19 (GTSMDGID) provides a ligand contact to ATP.

Belongs to the anhydro-N-acetylmuramic acid kinase family.

It carries out the reaction 1,6-anhydro-N-acetyl-beta-muramate + ATP + H2O = N-acetyl-D-muramate 6-phosphate + ADP + H(+). It functions in the pathway amino-sugar metabolism; 1,6-anhydro-N-acetylmuramate degradation. It participates in cell wall biogenesis; peptidoglycan recycling. Functionally, catalyzes the specific phosphorylation of 1,6-anhydro-N-acetylmuramic acid (anhMurNAc) with the simultaneous cleavage of the 1,6-anhydro ring, generating MurNAc-6-P. Is required for the utilization of anhMurNAc either imported from the medium or derived from its own cell wall murein, and thus plays a role in cell wall recycling. This is Anhydro-N-acetylmuramic acid kinase from Shewanella sediminis (strain HAW-EB3).